We begin with the raw amino-acid sequence, 312 residues long: Chorismate mutase 1, chloroplastic (312 aa).

The N-terminal 44 residues, methionine 1–arginine 44, are a transit peptide targeting the chloroplast. A disordered region spans residues alanine 16 to arginine 58. L-phenylalanine is bound by residues arginine 58 and asparagine 190 to serine 193. L-tyrosine contacts are provided by residues arginine 58 and asparagine 190 to serine 193. Residues arginine 58–aspartate 312 form the Chorismate mutase domain.

As to quaternary structure, homodimer. Interacts with Cmu1 of the fungal pathogen Ustilago maydis.

It is found in the plastid. The protein localises to the chloroplast. The enzyme catalyses chorismate = prephenate. The protein operates within metabolic intermediate biosynthesis; prephenate biosynthesis; prephenate from chorismate: step 1/1. Allosterically inhibited by tyrosine and phenylalanine. Activated by tryptophan. May play a role in chloroplast biogenesis. This chain is Chorismate mutase 1, chloroplastic, found in Zea mays (Maize).